Consider the following 169-residue polypeptide: 16S rRNA aminocarboxypropyltransferase (169 aa).

4 residues coordinate S-adenosyl-L-methionine: Thr15, Val65, Leu88, and Thr107.

Belongs to the TDD superfamily. TSR3 family.

It localises to the cytoplasm. It catalyses the reaction an N(1)-methylpseudouridine in rRNA + S-adenosyl-L-methionine = N(1)-methyl-N(3)-[(3S)-3-amino-3-carboxypropyl]pseudouridine in rRNA + S-methyl-5'-thioadenosine + H(+). In terms of biological role, aminocarboxypropyltransferase that catalyzes the aminocarboxypropyl transfer on pseudouridine corresponding to position 914 in M.jannaschii 16S rRNA. It constitutes the last step in biosynthesis of the hypermodified N1-methyl-N3-(3-amino-3-carboxypropyl) pseudouridine (m1acp3-Psi). The protein is 16S rRNA aminocarboxypropyltransferase of Methanopyrus kandleri (strain AV19 / DSM 6324 / JCM 9639 / NBRC 100938).